The chain runs to 264 residues: Thiazole synthase (264 aa).

Catalysis depends on Lys-106, which acts as the Schiff-base intermediate with DXP. 1-deoxy-D-xylulose 5-phosphate-binding positions include Gly-167, 193–194 (AG), and 215–216 (NT).

Belongs to the ThiG family. Homotetramer. Forms heterodimers with either ThiH or ThiS.

It localises to the cytoplasm. It carries out the reaction [ThiS sulfur-carrier protein]-C-terminal-Gly-aminoethanethioate + 2-iminoacetate + 1-deoxy-D-xylulose 5-phosphate = [ThiS sulfur-carrier protein]-C-terminal Gly-Gly + 2-[(2R,5Z)-2-carboxy-4-methylthiazol-5(2H)-ylidene]ethyl phosphate + 2 H2O + H(+). The protein operates within cofactor biosynthesis; thiamine diphosphate biosynthesis. Functionally, catalyzes the rearrangement of 1-deoxy-D-xylulose 5-phosphate (DXP) to produce the thiazole phosphate moiety of thiamine. Sulfur is provided by the thiocarboxylate moiety of the carrier protein ThiS. In vitro, sulfur can be provided by H(2)S. The chain is Thiazole synthase from Xanthomonas oryzae pv. oryzae (strain MAFF 311018).